Here is a 538-residue protein sequence, read N- to C-terminus: Cryptic outer membrane porin BglH (538 aa).

Positions 1-25 (MFRRNLITSAILLMAPLAFSAQSLA) are cleaved as a signal peptide. A disordered region spans residues 52 to 82 (KDEEKKKYTPATVNRSVSTNDQGYAANPFPT). Residues 62 to 73 (ATVNRSVSTNDQ) show a composition bias toward polar residues.

It belongs to the porin LamB (TC 1.B.3) family. In terms of assembly, homomonomer; no physical evidence of a homotrimer has been found, however conductance experiments suggest it may be a homotrimer. The monomer probably consists of 18 antiparallel beta-strands.

The protein resides in the cell outer membrane. In terms of biological role, part of a cryptic operon that is poorly expressed in vivo. May be an ancestral sugar porin with a broad carbohydrate specificity; it binds aromatic beta-D-glucosides such as arbutin and salicin, but with low affinity compared to the binding of maltooligosaccharides to the LamB porin. This chain is Cryptic outer membrane porin BglH (bglH), found in Escherichia coli (strain K12).